Reading from the N-terminus, the 291-residue chain is N-acetylmannosamine kinase (291 aa).

ATP contacts are provided by residues 5-12 (AIDIGGTK) and 132-139 (GVGGGVVS). H156, C166, C168, and C173 together coordinate Zn(2+).

This sequence belongs to the ROK (NagC/XylR) family. NanK subfamily. Homodimer.

It carries out the reaction an N-acyl-D-mannosamine + ATP = an N-acyl-D-mannosamine 6-phosphate + ADP + H(+). The protein operates within amino-sugar metabolism; N-acetylneuraminate degradation; D-fructose 6-phosphate from N-acetylneuraminate: step 2/5. Functionally, catalyzes the phosphorylation of N-acetylmannosamine (ManNAc) to ManNAc-6-P. In Escherichia coli (strain SMS-3-5 / SECEC), this protein is N-acetylmannosamine kinase.